Here is a 265-residue protein sequence, read N- to C-terminus: uncharacterized protein (265 aa).

Thiamine diphosphate is bound at residue glutamate 47. The tract at residues 204-247 (QHQMWLVQHILRVARHCGFTVTTMEMTLIETQVRLKITVKSDRT) is thiamine pyrophosphate binding.

This sequence belongs to the TPP enzyme family. Requires Mg(2+) as cofactor. Thiamine diphosphate serves as cofactor.

Functionally, truncated acetolactase synthase; no longer catalytically active. This is an uncharacterized protein from Haemophilus influenzae (strain ATCC 51907 / DSM 11121 / KW20 / Rd).